Reading from the N-terminus, the 549-residue chain is Maturase K (549 aa).

This sequence belongs to the intron maturase 2 family. MatK subfamily.

It localises to the plastid. The protein localises to the chloroplast. Functionally, usually encoded in the trnK tRNA gene intron. Probably assists in splicing its own and other chloroplast group II introns. This Albidella oligococca (Caldesia oligococca) protein is Maturase K.